The following is a 144-amino-acid chain: Large ribosomal subunit protein uL15 (144 aa).

The disordered stretch occupies residues 1-53 (MRLNTLSPAEGSKHASKRPGRGIGSGLGKTGGRGHKGQKSRSGGGVRRGFEGG). Over residues 21–31 (RGIGSGLGKTG) the composition is skewed to gly residues.

Belongs to the universal ribosomal protein uL15 family. As to quaternary structure, part of the 50S ribosomal subunit.

Binds to the 23S rRNA. The chain is Large ribosomal subunit protein uL15 from Sodalis glossinidius (strain morsitans).